The primary structure comprises 164 residues: Pheromone-binding protein (164 aa).

An N-terminal signal peptide occupies residues 1 to 22; the sequence is MSIQGQIALALMVNMAVGSVDA. Intrachain disulfides connect Cys-41-Cys-76, Cys-72-Cys-130, and Cys-119-Cys-139.

It belongs to the PBP/GOBP family. As to quaternary structure, homodimer. In terms of tissue distribution, antenna.

This major soluble protein in olfactory sensilla of male moths serves to solubilize the extremely hydrophobic pheromone molecules such as bombykol and to transport pheromone through the aqueous lymph to receptors located on olfactory cilia. The polypeptide is Pheromone-binding protein (Bombyx mori (Silk moth)).